We begin with the raw amino-acid sequence, 670 residues long: Acetyl-coenzyme A synthetase (670 aa).

CoA is bound by residues 205-208 and T326; that span reads RRGK. ATP is bound by residues 402-404, 426-431, D517, R532, and R543; these read GEP and STWWMT. 3 residues coordinate Mg(2+): V554, H556, and V559. Position 601 (R601) interacts with CoA. K626 bears the N6-acetyllysine mark.

The protein belongs to the ATP-dependent AMP-binding enzyme family. Mg(2+) is required as a cofactor. Acetylated. Deacetylation by the SIR2-homolog deacetylase activates the enzyme.

The enzyme catalyses acetate + ATP + CoA = acetyl-CoA + AMP + diphosphate. Catalyzes the conversion of acetate into acetyl-CoA (AcCoA), an essential intermediate at the junction of anabolic and catabolic pathways. AcsA undergoes a two-step reaction. In the first half reaction, AcsA combines acetate with ATP to form acetyl-adenylate (AcAMP) intermediate. In the second half reaction, it can then transfer the acetyl group from AcAMP to the sulfhydryl group of CoA, forming the product AcCoA. This chain is Acetyl-coenzyme A synthetase, found in Pyrobaculum arsenaticum (strain DSM 13514 / JCM 11321 / PZ6).